Reading from the N-terminus, the 730-residue chain is Ribosomal RNA large subunit methyltransferase K/L (730 aa).

A THUMP domain is found at 46 to 157 (TAYRLCLWSR…RGEAILSLDL (112 aa)). A compositionally biased stretch (basic and acidic residues) spans 399 to 408 (AAVEEGEPRR). A disordered region spans residues 399–418 (AAVEEGEPRRQAPVASEPAR).

Belongs to the methyltransferase superfamily. RlmKL family.

It is found in the cytoplasm. It catalyses the reaction guanosine(2445) in 23S rRNA + S-adenosyl-L-methionine = N(2)-methylguanosine(2445) in 23S rRNA + S-adenosyl-L-homocysteine + H(+). The catalysed reaction is guanosine(2069) in 23S rRNA + S-adenosyl-L-methionine = N(2)-methylguanosine(2069) in 23S rRNA + S-adenosyl-L-homocysteine + H(+). Specifically methylates the guanine in position 2445 (m2G2445) and the guanine in position 2069 (m7G2069) of 23S rRNA. This Pseudomonas entomophila (strain L48) protein is Ribosomal RNA large subunit methyltransferase K/L.